The primary structure comprises 121 residues: MSRGKRPKWMIEIAIERMNILFERAEMEFERHPERSNRYVVLAKKLSTKYNTKIPDKWARRYCKRCNKFLYPGHNATVRLVNEEVNILCGECGHVMKIPYHKEKKNKRRARYESIKKRNDE.

The Zn(2+) site is built by C63, C66, C89, and C92.

The protein belongs to the eukaryotic/archaeal RNase P protein component 4 family. In terms of assembly, consists of a catalytic RNA component and at least 4-5 protein subunits. It depends on Zn(2+) as a cofactor.

Its subcellular location is the cytoplasm. It carries out the reaction Endonucleolytic cleavage of RNA, removing 5'-extranucleotides from tRNA precursor.. In terms of biological role, part of ribonuclease P, a protein complex that generates mature tRNA molecules by cleaving their 5'-ends. This Methanobrevibacter smithii (strain ATCC 35061 / DSM 861 / OCM 144 / PS) protein is Ribonuclease P protein component 4.